A 452-amino-acid chain; its full sequence is Bifunctional protein GlmU (452 aa).

The segment at 1 to 232 (MTTNAPGAVI…EADMQGVNSR (232 aa)) is pyrophosphorylase. UDP-N-acetyl-alpha-D-glucosamine is bound by residues 11 to 14 (LAAG), Lys-25, Gln-78, and 83 to 84 (GT). Asp-108 lines the Mg(2+) pocket. UDP-N-acetyl-alpha-D-glucosamine-binding residues include Gly-144, Glu-158, and Asn-230. Asn-230 lines the Mg(2+) pocket. The segment at 233 to 253 (ADLAAAEATMQQRLRMAAMAG) is linker. Residues 254–452 (GVTMLDPSSV…HKDKKKASGE (199 aa)) are N-acetyltransferase. Residues Arg-319 and Lys-337 each coordinate UDP-N-acetyl-alpha-D-glucosamine. The Proton acceptor role is filled by His-349. Tyr-352 and Asn-363 together coordinate UDP-N-acetyl-alpha-D-glucosamine. Acetyl-CoA is bound by residues Ala-366, 372-373 (NY), Ser-391, Ser-409, and Arg-426.

In the N-terminal section; belongs to the N-acetylglucosamine-1-phosphate uridyltransferase family. The protein in the C-terminal section; belongs to the transferase hexapeptide repeat family. As to quaternary structure, homotrimer. Mg(2+) serves as cofactor.

It is found in the cytoplasm. It carries out the reaction alpha-D-glucosamine 1-phosphate + acetyl-CoA = N-acetyl-alpha-D-glucosamine 1-phosphate + CoA + H(+). The catalysed reaction is N-acetyl-alpha-D-glucosamine 1-phosphate + UTP + H(+) = UDP-N-acetyl-alpha-D-glucosamine + diphosphate. The protein operates within nucleotide-sugar biosynthesis; UDP-N-acetyl-alpha-D-glucosamine biosynthesis; N-acetyl-alpha-D-glucosamine 1-phosphate from alpha-D-glucosamine 6-phosphate (route II): step 2/2. Its pathway is nucleotide-sugar biosynthesis; UDP-N-acetyl-alpha-D-glucosamine biosynthesis; UDP-N-acetyl-alpha-D-glucosamine from N-acetyl-alpha-D-glucosamine 1-phosphate: step 1/1. It functions in the pathway bacterial outer membrane biogenesis; LPS lipid A biosynthesis. Its function is as follows. Catalyzes the last two sequential reactions in the de novo biosynthetic pathway for UDP-N-acetylglucosamine (UDP-GlcNAc). The C-terminal domain catalyzes the transfer of acetyl group from acetyl coenzyme A to glucosamine-1-phosphate (GlcN-1-P) to produce N-acetylglucosamine-1-phosphate (GlcNAc-1-P), which is converted into UDP-GlcNAc by the transfer of uridine 5-monophosphate (from uridine 5-triphosphate), a reaction catalyzed by the N-terminal domain. This Parvibaculum lavamentivorans (strain DS-1 / DSM 13023 / NCIMB 13966) protein is Bifunctional protein GlmU.